Reading from the N-terminus, the 263-residue chain is Versicolorin reductase 1 (263 aa).

Residues Ile-22, Asp-68, Asn-95, and Arg-128 each coordinate NADP(+). Active-site proton donor residues include Ser-144 and Ser-145. Positions 159, 163, 192, and 194 each coordinate NADP(+). Tyr-159 serves as the catalytic Proton acceptor. Residue Lys-163 is the Lowers pKa of active site Tyr of the active site.

Belongs to the short-chain dehydrogenases/reductases (SDR) family.

The protein localises to the cytoplasm. The protein resides in the cytosol. The protein operates within mycotoxin biosynthesis. Its function is as follows. Versicolorin reductase; part of the fragmented gene cluster that mediates the biosynthesis of dothistromin (DOTH), a polyketide toxin very similar in structure to the aflatoxin precursor, versicolorin B. The first step of the pathway is the conversion of acetate to norsolorinic acid (NOR) and requires the fatty acid synthase subunits hexA and hexB, as well as the polyketide synthase pksA. PksA combines a hexanoyl starter unit and 7 malonyl-CoA extender units to synthesize the precursor NOR. The hexanoyl starter unit is provided to the acyl-carrier protein (ACP) domain by the fungal fatty acid synthase hexA/hexB. The second step is the conversion of NOR to averantin (AVN) and requires the norsolorinic acid ketoreductase nor1, which catalyzes the dehydration of norsolorinic acid to form (1'S)-averantin. The cytochrome P450 monooxygenase avnA then catalyzes the hydroxylation of AVN to 5'hydroxyaverantin (HAVN). The next step is performed by adhA that transforms HAVN to averufin (AVF). Averufin might then be converted to hydroxyversicolorone by cypX and avfA. Hydroxyversicolorone is further converted versiconal hemiacetal acetate (VHA) by moxY. VHA is then the substrate for the versiconal hemiacetal acetate esterase est1 to yield versiconal (VAL). Versicolorin B synthase vbsA then converts VAL to versicolorin B (VERB) by closing the bisfuran ring. Then, the activity of the versicolorin B desaturase verB leads to versicolorin A (VERA). DotB, a predicted chloroperoxidase, may perform epoxidation of the A-ring of VERA. Alternatively, a cytochrome P450, such as cypX or avnA could catalyze this step. It is also possible that another, uncharacterized, cytochrome P450 enzyme is responsible for this step. Opening of the epoxide could potentially be achieved by the epoxide hydrolase epoA. However, epoA seems not to be required for DOTH biosynthesis, but other epoxide hydrolases may have the ability to complement this hydrolysis. Alternatively, opening of the epoxide ring could be achieved non-enzymatically. The next step is the deoxygenation of ring A to yield the 5,8-dihydroxyanthraquinone which is most likely catalyzed by the NADPH dehydrogenase encoded by ver1. The last stages of DOTH biosynthesis are proposed to involve hydroxylation of the bisfuran. OrdB and norB might have oxidative roles here. An alternative possibility is that cytochrome P450 monoogenases such as avnA and cypX might perform these steps in addition to previously proposed steps. This chain is Versicolorin reductase 1, found in Dothistroma septosporum (Red band needle blight fungus).